The primary structure comprises 429 residues: Cytochrome P450 BJ-3 (429 aa).

Cys376 provides a ligand contact to heme.

This sequence belongs to the cytochrome P450 family. Heme is required as a cofactor.

Cytochromes P450 are a group of heme-thiolate monooxygenases. They oxidize a variety of structurally unrelated compounds, including steroids, fatty acids, and xenobiotics. The chain is Cytochrome P450 BJ-3 (cyp114) from Bradyrhizobium diazoefficiens (strain JCM 10833 / BCRC 13528 / IAM 13628 / NBRC 14792 / USDA 110).